We begin with the raw amino-acid sequence, 399 residues long: MVEAGTRDPLESALLDSRYLVQAKIASGGTSTVYRGLDVRLDRPVALKVMDSRYAGDEQFLTRFRLEARAVARLNNRALVAVYDQGKDGRHPFLVMELIEGGTLRELLIERGPMPPHAVVAVLRPVLGGLAAAHRAGLVHRDVKPENILISDDGDVKLADFGLVRAVAAASITSTGVILGTAAYLSPEQVRDGNADPRSDVYSVGVLVYELLTGHTPFTGDSALSIAYQRLDADVPRASAVIDGVPPQFDELVACATARNPADRYADAIAMGADLEAIAEELALPEFRVPAPRNSAQHRSAALYRSRITQQGQLGAKPVHHPTRQLTRQPGDCSEPASGSEPEHEPITGQFAGIAIEEFIWARQHARRMVLVWVSVVLAITGLVASAAWTIGSNLSGLL.

The Cytoplasmic portion of the chain corresponds to 1 to 368 (MVEAGTRDPL…FIWARQHARR (368 aa)). Residues 19–278 (YLVQAKIASG…IAMGADLEAI (260 aa)) enclose the Protein kinase domain. ATP-binding positions include 25–33 (IASGGTSTV) and Lys-48. At Thr-32 the chain carries Phosphothreonine; by autocatalysis. Thr-62 is modified (phosphothreonine; by autocatalysis). Asp-142 (proton acceptor) is an active-site residue. Thr-173, Thr-175, and Thr-323 each carry phosphothreonine; by autocatalysis. Residues 312–346 (GQLGAKPVHHPTRQLTRQPGDCSEPASGSEPEHEP) are disordered. Residues 369-389 (MVLVWVSVVLAITGLVASAAW) form a helical membrane-spanning segment. Residues 390 to 399 (TIGSNLSGLL) lie on the Extracellular side of the membrane.

Belongs to the protein kinase superfamily. Ser/Thr protein kinase family. In terms of processing, autophosphorylated. Thr-173 is required for autophosphorylation and transphosphorylation activities. Thr-175 is not necessary for autophosphorylation activity, but is required for full kinase activity.

The protein resides in the cell membrane. The enzyme catalyses L-seryl-[protein] + ATP = O-phospho-L-seryl-[protein] + ADP + H(+). The catalysed reaction is L-threonyl-[protein] + ATP = O-phospho-L-threonyl-[protein] + ADP + H(+). In terms of biological role, phosphorylates the DNA-binding protein MT2231. May be involved in the regulation of cell division and cell envelope biosynthesis. The sequence is that of Serine/threonine-protein kinase PknL (pknL) from Mycobacterium tuberculosis (strain CDC 1551 / Oshkosh).